Consider the following 298-residue polypeptide: ATP synthase gamma chain (298 aa).

The protein belongs to the ATPase gamma chain family. In terms of assembly, F-type ATPases have 2 components, CF(1) - the catalytic core - and CF(0) - the membrane proton channel. CF(1) has five subunits: alpha(3), beta(3), gamma(1), delta(1), epsilon(1). CF(0) has three main subunits: a, b and c.

It is found in the cell inner membrane. Produces ATP from ADP in the presence of a proton gradient across the membrane. The gamma chain is believed to be important in regulating ATPase activity and the flow of protons through the CF(0) complex. The polypeptide is ATP synthase gamma chain (Francisella tularensis subsp. mediasiatica (strain FSC147)).